Reading from the N-terminus, the 187-residue chain is Elongation factor P (187 aa).

The protein belongs to the elongation factor P family.

The protein resides in the cytoplasm. It participates in protein biosynthesis; polypeptide chain elongation. Functionally, involved in peptide bond synthesis. Stimulates efficient translation and peptide-bond synthesis on native or reconstituted 70S ribosomes in vitro. Probably functions indirectly by altering the affinity of the ribosome for aminoacyl-tRNA, thus increasing their reactivity as acceptors for peptidyl transferase. This Synechocystis sp. (strain ATCC 27184 / PCC 6803 / Kazusa) protein is Elongation factor P (efp).